Here is a 91-residue protein sequence, read N- to C-terminus: MGRSLKKGPFIADSLLRKVEKQNDNDDKSVIKTWSRASTILPMMIGHTIAVHNGRTHVPVFITEQMVGHKLGEFAPTRTFKGHIRDKKGGR.

The protein belongs to the universal ribosomal protein uS19 family.

In terms of biological role, protein S19 forms a complex with S13 that binds strongly to the 16S ribosomal RNA. The polypeptide is Small ribosomal subunit protein uS19 (Synechococcus sp. (strain CC9605)).